Consider the following 958-residue polypeptide: Transportin MOS14 (958 aa).

The Importin N-terminal domain maps to 26 to 93 (ADRWLQNFQG…RQSLTTLLKK (68 aa)).

Belongs to the importin beta family. As to quaternary structure, interacts with RS2Z33, RSZ21, RS31A, SR34 and RAN1.

The protein resides in the nucleus. In terms of biological role, functions as a nuclear import receptor for serine-arginine rich (SR) proteins. Regulates nuclear import of SR proteins that are required for proper splicing of the two resistance (R) genes SNC1 and RPS4, a crucial step for their functions in plant immunity. The polypeptide is Transportin MOS14 (Arabidopsis thaliana (Mouse-ear cress)).